Reading from the N-terminus, the 433-residue chain is Dihydroorotase (433 aa).

His-63 and His-65 together coordinate Zn(2+). Substrate-binding positions include 65 to 67 and Asn-97; that span reads HLR. Positions 155, 182, and 235 each coordinate Zn(2+). A substrate-binding site is contributed by Asn-283. Asp-310 lines the Zn(2+) pocket. Asp-310 is an active-site residue. Residue His-314 coordinates substrate.

This sequence belongs to the metallo-dependent hydrolases superfamily. DHOase family. Class I DHOase subfamily. Zn(2+) is required as a cofactor.

The enzyme catalyses (S)-dihydroorotate + H2O = N-carbamoyl-L-aspartate + H(+). It functions in the pathway pyrimidine metabolism; UMP biosynthesis via de novo pathway; (S)-dihydroorotate from bicarbonate: step 3/3. Functionally, catalyzes the reversible cyclization of carbamoyl aspartate to dihydroorotate. The polypeptide is Dihydroorotase (Anaeromyxobacter dehalogenans (strain 2CP-1 / ATCC BAA-258)).